We begin with the raw amino-acid sequence, 289 residues long: DDRGK domain-containing protein 1 (289 aa).

Over 1–2 (MD) the chain is Lumenal. A helical membrane pass occupies residues 3–23 (PFILAAIISGIVIIILSIAFL). Residues 24–289 (RVSQVKPQAA…LINLAPVTVP (266 aa)) lie on the Cytoplasmic side of the membrane. The segment at 65-168 (RHQAALEEEP…DERKKREQEE (104 aa)) is disordered. Positions 70–85 (LEEEPEIQEEADEGAP) are enriched in acidic residues. The segment covering 87–166 (IDQKIDFDDK…AEDERKKREQ (80 aa)) has biased composition (basic and acidic residues).

This sequence belongs to the DDRGK1 family. In terms of assembly, interacts with Atg9; the interaction is transient.

Its subcellular location is the endoplasmic reticulum membrane. Functionally, substrate adapter for ufmylation, the covalent attachment of the ubiquitin-like modifier UFM1 to substrate proteins. Required for ufmylation of Atg9; protects the nervous system during aging, possibly by stabilizing Atg9 and supporting its function. This Bombyx mori (Silk moth) protein is DDRGK domain-containing protein 1.